The chain runs to 271 residues: Phosphate import ATP-binding protein PstB (271 aa).

Residues 24–266 (MIGKDVSVYY…PDDQRTQDYI (243 aa)) enclose the ABC transporter domain. Residue 56-63 (GPSGCGKS) participates in ATP binding.

This sequence belongs to the ABC transporter superfamily. Phosphate importer (TC 3.A.1.7) family. As to quaternary structure, the complex is composed of two ATP-binding proteins (PstB), two transmembrane proteins (PstC and PstA) and a solute-binding protein (PstS).

It localises to the cell inner membrane. It catalyses the reaction phosphate(out) + ATP + H2O = ADP + 2 phosphate(in) + H(+). Its function is as follows. Part of the ABC transporter complex PstSACB involved in phosphate import. Responsible for energy coupling to the transport system. The sequence is that of Phosphate import ATP-binding protein PstB from Agrobacterium fabrum (strain C58 / ATCC 33970) (Agrobacterium tumefaciens (strain C58)).